The following is a 731-amino-acid chain: 1,4-alpha-glucan branching enzyme GlgB (731 aa).

Aspartate 411 serves as the catalytic Nucleophile. The Proton donor role is filled by glutamate 464.

It belongs to the glycosyl hydrolase 13 family. GlgB subfamily. In terms of assembly, monomer.

The catalysed reaction is Transfers a segment of a (1-&gt;4)-alpha-D-glucan chain to a primary hydroxy group in a similar glucan chain.. Its pathway is glycan biosynthesis; glycogen biosynthesis. Its function is as follows. Catalyzes the formation of the alpha-1,6-glucosidic linkages in glycogen by scission of a 1,4-alpha-linked oligosaccharide from growing alpha-1,4-glucan chains and the subsequent attachment of the oligosaccharide to the alpha-1,6 position. The polypeptide is 1,4-alpha-glucan branching enzyme GlgB (Mycobacterium ulcerans (strain Agy99)).